The following is a 196-amino-acid chain: Probable peptidyl-prolyl cis-trans isomerase (196 aa).

Residues 1-26 form the signal peptide; it reads MSFIRSALAAAAFVALSIGAVQTASA. Residues 29–194 form the PPIase cyclophilin-type domain; that stretch reads PENTVILKLK…KIIKATIEAD (166 aa).

It belongs to the cyclophilin-type PPIase family.

It localises to the periplasm. The enzyme catalyses [protein]-peptidylproline (omega=180) = [protein]-peptidylproline (omega=0). Functionally, PPIases accelerate the folding of proteins. It catalyzes the cis-trans isomerization of proline imidic peptide bonds in oligopeptides. In Brucella melitensis biotype 1 (strain ATCC 23456 / CCUG 17765 / NCTC 10094 / 16M), this protein is Probable peptidyl-prolyl cis-trans isomerase (ppi).